The chain runs to 427 residues: Peptidase B (427 aa).

Lysine 195 and aspartate 200 together coordinate Mn(2+). Residue lysine 207 is part of the active site. Mn(2+) contacts are provided by aspartate 218, aspartate 277, and glutamate 279. The active site involves arginine 281.

The protein belongs to the peptidase M17 family. In terms of assembly, homohexamer. Requires Mn(2+) as cofactor.

The protein resides in the cytoplasm. It catalyses the reaction Release of an N-terminal amino acid, Xaa, from a peptide or arylamide. Xaa is preferably Glu or Asp but may be other amino acids, including Leu, Met, His, Cys and Gln.. Probably plays an important role in intracellular peptide degradation. The chain is Peptidase B from Escherichia fergusonii (strain ATCC 35469 / DSM 13698 / CCUG 18766 / IAM 14443 / JCM 21226 / LMG 7866 / NBRC 102419 / NCTC 12128 / CDC 0568-73).